The primary structure comprises 745 residues: Inhibitor of nuclear factor kappa-B kinase subunit alpha (745 aa).

Residues 15–300 enclose the Protein kinase domain; sequence WEMRERLGTG…IDLTLKQPRC (286 aa). Residues 21 to 29 and Lys-44 contribute to the ATP site; that span reads LGTGGFGNV. The residue at position 23 (Thr-23) is a Phosphothreonine; by PKB/AKT1 and SGK1. Residue Asp-144 is the Proton acceptor of the active site. Position 176 is a phosphoserine; by MAP3K14 (Ser-176). Position 180 is a phosphoserine; by SGK1 (Ser-180). The tract at residues 455–476 is leucine-zipper; sequence LLRYNANLTKMKNTLISASQQL. Residues 738-743 form an NEMO-binding region; it reads LDWSWL.

The protein belongs to the protein kinase superfamily. Ser/Thr protein kinase family. I-kappa-B kinase subfamily. Component of the I-kappa-B-kinase (IKK) core complex consisting of CHUK, IKBKB and IKBKG; probably four alpha/CHUK-beta/IKBKB dimers are associated with four gamma/IKBKG subunits. The IKK core complex seems to associate with regulatory or adapter proteins to form a IKK-signalosome holo-complex. The IKK complex associates with TERF2IP/RAP1, leading to promote IKK-mediated phosphorylation of RELA/p65. Part of a complex composed of NCOA2, NCOA3, CHUK/IKKA, IKBKB, IKBKG and CREBBP. Part of a 70-90 kDa complex at least consisting of CHUK/IKKA, IKBKB, NFKBIA, RELA, ELP1 and MAP3K14. Directly interacts with TRPC4AP. May interact with TRAF2. Interacts with NALP2. May interact with MAVS/IPS1. Interacts with ARRB1 and ARRB2. Interacts with NLRC5; prevents CHUK phosphorylation and kinase activity. Interacts with PIAS1; this interaction induces PIAS1 phosphorylation. Interacts with ZNF268 isoform 2; the interaction is further increased in a TNF-alpha-dependent manner. Interacts with LRRC14. Interacts with SASH1. Directly interacts with DDX3X after the physiological activation of the TLR7 and TLR8 pathways; this interaction enhances CHUK autophosphorylation. Ubiquitinated by TRIM56 via 'Lys-63'-linked ubiquitination, promoting activation of CHUK/IKKA. Post-translationally, phosphorylated by MAP3K14/NIK, AKT and to a lesser extent by MEKK1, and dephosphorylated by PP2A. Autophosphorylated. In terms of tissue distribution, ubiquitous only for isoform 1, isoforms 2 and 3 are expressed predominantly in brain and T-lymphocytes.

Its subcellular location is the cytoplasm. It is found in the nucleus. It carries out the reaction L-seryl-[I-kappa-B protein] + ATP = O-phospho-L-seryl-[I-kappa-B protein] + ADP + H(+). With respect to regulation, activated when phosphorylated and inactivated when dephosphorylated. In terms of biological role, serine kinase that plays an essential role in the NF-kappa-B signaling pathway which is activated by multiple stimuli such as inflammatory cytokines, bacterial or viral products, DNA damages or other cellular stresses. Acts as a part of the canonical IKK complex in the conventional pathway of NF-kappa-B activation and phosphorylates inhibitors of NF-kappa-B on serine residues. These modifications allow polyubiquitination of the inhibitors and subsequent degradation by the proteasome. In turn, free NF-kappa-B is translocated into the nucleus and activates the transcription of hundreds of genes involved in immune response, growth control, or protection against apoptosis. Negatively regulates the pathway by phosphorylating the scaffold protein TAXBP1 and thus promoting the assembly of the A20/TNFAIP3 ubiquitin-editing complex (composed of A20/TNFAIP3, TAX1BP1, and the E3 ligases ITCH and RNF11). Therefore, CHUK plays a key role in the negative feedback of NF-kappa-B canonical signaling to limit inflammatory gene activation. As part of the non-canonical pathway of NF-kappa-B activation, the MAP3K14-activated CHUK/IKKA homodimer phosphorylates NFKB2/p100 associated with RelB, inducing its proteolytic processing to NFKB2/p52 and the formation of NF-kappa-B RelB-p52 complexes. In turn, these complexes regulate genes encoding molecules involved in B-cell survival and lymphoid organogenesis. Also participates in the negative feedback of the non-canonical NF-kappa-B signaling pathway by phosphorylating and destabilizing MAP3K14/NIK. Within the nucleus, phosphorylates CREBBP and consequently increases both its transcriptional and histone acetyltransferase activities. Modulates chromatin accessibility at NF-kappa-B-responsive promoters by phosphorylating histones H3 at 'Ser-10' that are subsequently acetylated at 'Lys-14' by CREBBP. Additionally, phosphorylates the CREBBP-interacting protein NCOA3. Also phosphorylates FOXO3 and may regulate this pro-apoptotic transcription factor. Phosphorylates RIPK1 at 'Ser-25' which represses its kinase activity and consequently prevents TNF-mediated RIPK1-dependent cell death. Phosphorylates AMBRA1 following mitophagy induction, promoting AMBRA1 interaction with ATG8 family proteins and its mitophagic activity. In Mus musculus (Mouse), this protein is Inhibitor of nuclear factor kappa-B kinase subunit alpha (Chuk).